Consider the following 638-residue polypeptide: Threonine--tRNA ligase (638 aa).

The 61-residue stretch at 1–61 (MPKITLPDGT…KNDSKVVIIT (61 aa)) folds into the TGS domain. Positions 242 to 533 (DHRKLGKKHS…LIEQYEAKFP (292 aa)) are catalytic. 3 residues coordinate Zn(2+): cysteine 333, histidine 384, and histidine 510.

It belongs to the class-II aminoacyl-tRNA synthetase family. Homodimer. It depends on Zn(2+) as a cofactor.

The protein localises to the cytoplasm. The catalysed reaction is tRNA(Thr) + L-threonine + ATP = L-threonyl-tRNA(Thr) + AMP + diphosphate + H(+). In terms of biological role, catalyzes the attachment of threonine to tRNA(Thr) in a two-step reaction: L-threonine is first activated by ATP to form Thr-AMP and then transferred to the acceptor end of tRNA(Thr). Also edits incorrectly charged L-seryl-tRNA(Thr). The polypeptide is Threonine--tRNA ligase (Prochlorococcus marinus (strain MIT 9515)).